Here is a 1406-residue protein sequence, read N- to C-terminus: Protein FAM135B (1406 aa).

2 disordered regions span residues 519-548 (WTGQTSDAGTYPVADVDTSRRSPGPEDGQA) and 770-820 (SVSA…GDSG). Ser-777 and Ser-778 each carry phosphoserine. Residues 804–816 (KSQGSPGSCSQLC) are compositionally biased toward polar residues.

It belongs to the FAM135 family.

The chain is Protein FAM135B (FAM135B) from Homo sapiens (Human).